The chain runs to 614 residues: Translation initiation factor IF-2 (614 aa).

Residues 115 to 283 (ARAPIVTIMG…ILLIAELNDY (169 aa)) form the tr-type G domain. The interval 124-131 (GHVDHGKT) is G1. 124-131 (GHVDHGKT) contributes to the GTP binding site. Residues 149–153 (GITQH) are G2. Positions 170-173 (DTPG) are G3. GTP contacts are provided by residues 170-174 (DTPGH) and 224-227 (NKMD). Residues 224 to 227 (NKMD) are G4. The segment at 260–262 (SAL) is G5.

It belongs to the TRAFAC class translation factor GTPase superfamily. Classic translation factor GTPase family. IF-2 subfamily.

Its subcellular location is the cytoplasm. Functionally, one of the essential components for the initiation of protein synthesis. Protects formylmethionyl-tRNA from spontaneous hydrolysis and promotes its binding to the 30S ribosomal subunits. Also involved in the hydrolysis of GTP during the formation of the 70S ribosomal complex. In Ureaplasma urealyticum serovar 10 (strain ATCC 33699 / Western), this protein is Translation initiation factor IF-2.